The primary structure comprises 560 residues: Cytosolic purine 5'-nucleotidase (560 aa).

Catalysis depends on D52, which acts as the Nucleophile. 2 residues coordinate IMP: D52 and D54. Mg(2+) is bound by residues D52 and D54. Residue D54 is the Proton donor of the active site. ATP is bound by residues R144 and N154. IMP-binding residues include R202, D206, K215, T249, N250, S251, and K292. A Mg(2+)-binding site is contributed by D351. A Phosphoserine modification is found at S418. Residues Q453 and R456 each coordinate ATP. 3 positions are modified to phosphoserine: S502, S511, and S527. Residues 541–560 (PQEITHCHDEDDDEEEEEEE) are disordered. The segment at 548-560 (HDEDDDEEEEEEE) is required for tetramer assembly. Residues 550 to 560 (EDDDEEEEEEE) show a composition bias toward acidic residues.

Belongs to the 5'(3')-deoxyribonucleotidase family. In terms of assembly, homotetramer. The cofactor is Mg(2+).

It is found in the cytoplasm. Its subcellular location is the cytosol. It catalyses the reaction a ribonucleoside 5'-phosphate + H2O = a ribonucleoside + phosphate. The enzyme catalyses a 2'-deoxyribonucleoside + a ribonucleoside 5'-phosphate = a ribonucleoside + a 2'-deoxyribonucleoside 5'-phosphate. The catalysed reaction is IMP + H2O = inosine + phosphate. It carries out the reaction GMP + H2O = guanosine + phosphate. It catalyses the reaction dGMP + H2O = 2'-deoxyguanosine + phosphate. The enzyme catalyses dIMP + H2O = 2'-deoxyinosine + phosphate. The catalysed reaction is XMP + H2O = xanthosine + phosphate. It carries out the reaction inosine + GMP = guanosine + IMP. It catalyses the reaction dGMP + inosine = 2'-deoxyguanosine + IMP. The enzyme catalyses dIMP + inosine = 2'-deoxyinosine + IMP. The catalysed reaction is inosine + UMP = uridine + IMP. It carries out the reaction inosine + CMP = cytidine + IMP. It catalyses the reaction inosine + AMP = IMP + adenosine. Its activity is regulated as follows. Allosterically activated by various compounds including ATP, 2,3-BPG/2,3-Bisphosphoglyceric acid and Ap4A/P1,P4-bis(5'-adenosyl) tetraphosphate. Binding of an allosteric activator is a prerequisiste to magnesium and substrate binding. Inhibited by inorganic phosphate. Its function is as follows. Broad specificity cytosolic 5'-nucleotidase that catalyzes the dephosphorylation of 6-hydroxypurine nucleoside 5'-monophosphates. In addition, possesses a phosphotransferase activity by which it can transfer a phosphate from a donor nucleoside monophosphate to an acceptor nucleoside, preferably inosine, deoxyinosine and guanosine. Has the highest activities for IMP and GMP followed by dIMP, dGMP and XMP. Could also catalyze the transfer of phosphates from pyrimidine monophosphates but with lower efficiency. Through these activities regulates the purine nucleoside/nucleotide pools within the cell. This is Cytosolic purine 5'-nucleotidase from Mus musculus (Mouse).